The sequence spans 377 residues: MKFERARPFIAIVFIQCLYALMSIVAKLALNKGMSPHVLVAYRMAVASALITPFALILERNTRPKLTFKILLQIAILSLFEPVVEQNLYYSGMKLTTATFTSALCNALPAMTFIMACVFKLEKVTIERRHSQAKLVGTMVAIGGAMLMTFVKGNVIELPWTSNSRGLNGHTHAMRIPKQADIARGSIMLVASCFSWSCYIILQAKILAQYKAELSLTALMCIMGMLEATVMGLIWERKNMSVWKINPDVTLLASIYGGLVSGLAYYVIGWASKERGPVFVSAFNPLSMVLVAILSTFVFLEKVYVGRVIGSVVIVIGIYLVLWGKSKDKGGMLQPNAGCAETVVKIDQQKVPTPDNNQVVSISYHLMIPKAAARSQE.

10 helical membrane-spanning segments follow: residues 9–29 (FIAIVFIQCLYALMSIVAKLA), 38–58 (VLVAYRMAVASALITPFALIL), 64–84 (PKLTFKILLQIAILSLFEPVV), 99–119 (TFTSALCNALPAMTFIMACVF), 136–156 (VGTMVAIGGAMLMTFVKGNVI), 187–207 (IMLVASCFSWSCYIILQAKIL), 214–234 (LSLTALMCIMGMLEATVMGLI), 251–271 (LLASIYGGLVSGLAYYVIGWA), 279–299 (FVSAFNPLSMVLVAILSTFVF), and 303–323 (VYVGRVIGSVVIVIGIYLVLW). 2 EamA domains span residues 18-149 (LYAL…MLMT) and 194-322 (FSWS…YLVL).

It belongs to the drug/metabolite transporter (DMT) superfamily. Plant drug/metabolite exporter (P-DME) (TC 2.A.7.4) family.

Its subcellular location is the membrane. The chain is WAT1-related protein At5g13670 from Arabidopsis thaliana (Mouse-ear cress).